The primary structure comprises 233 residues: H-2 class II histocompatibility antigen, A-R alpha chain (233 aa).

Residues 1 to 88 form an alpha-1 region; that stretch reads EDDIEADHVG…KRSNFTPAAN (88 aa). Residues 1–195 lie on the Extracellular side of the membrane; it reads EDDIEADHVG…IPAPMSELTE (195 aa). Residues 89-182 are alpha-2; sequence EAPQATVFPK…GLEEPVLKHW (94 aa). Residues 91 to 183 form the Ig-like C1-type domain; it reads PQATVFPKSP…LEEPVLKHWE (93 aa). A disulfide bridge connects residues cysteine 111 and cysteine 167. The N-linked (GlcNAc...) asparagine glycan is linked to asparagine 122. The connecting peptide stretch occupies residues 183 to 195; sequence EPEIPAPMSELTE. A helical transmembrane segment spans residues 196-221; the sequence is TVVCALGLSVGLVGIVVGTIFIIQGL. Over 222–233 the chain is Cytoplasmic; the sequence is RSGGTSRHPGPL.

It belongs to the MHC class II family.

It localises to the membrane. This chain is H-2 class II histocompatibility antigen, A-R alpha chain (H2-Aa), found in Mus musculus (Mouse).